The primary structure comprises 294 residues: GTPase Era (294 aa).

One can recognise an Era-type G domain in the interval 4-170; that stretch reads KSGFVSVIGR…VEEIFTFLPE (167 aa). Residues 12 to 19 form a G1 region; the sequence is GRPNVGKS. 12–19 is a GTP binding site; it reads GRPNVGKS. Residues 38 to 42 form a G2 region; the sequence is QTTRN. The interval 59-62 is G3; that stretch reads DTPG. Residues 59-63 and 121-124 contribute to the GTP site; these read DTPGI and NKID. The tract at residues 121-124 is G4; the sequence is NKID. The segment at 149 to 151 is G5; it reads ISA. A KH type-2 domain is found at 201–278; the sequence is TREEVPYGVA…YLDLWVKIEK (78 aa).

It belongs to the TRAFAC class TrmE-Era-EngA-EngB-Septin-like GTPase superfamily. Era GTPase family. Monomer.

It is found in the cytoplasm. It localises to the cell inner membrane. An essential GTPase that binds both GDP and GTP, with rapid nucleotide exchange. Plays a role in 16S rRNA processing and 30S ribosomal subunit biogenesis and possibly also in cell cycle regulation and energy metabolism. The chain is GTPase Era from Halothermothrix orenii (strain H 168 / OCM 544 / DSM 9562).